The following is a 349-amino-acid chain: 3-isopropylmalate dehydrogenase (349 aa).

The substrate site is built by Arg-91, Arg-101, Arg-129, and Asp-219. 3 residues coordinate Mg(2+): Asp-219, Asp-243, and Asp-247. 277-289 contributes to the NAD(+) binding site; sequence GSAPDIAGLGKAN.

Belongs to the isocitrate and isopropylmalate dehydrogenases family. LeuB type 1 subfamily. In terms of assembly, homodimer. Mg(2+) is required as a cofactor. Requires Mn(2+) as cofactor.

It is found in the cytoplasm. The catalysed reaction is (2R,3S)-3-isopropylmalate + NAD(+) = 4-methyl-2-oxopentanoate + CO2 + NADH. It participates in amino-acid biosynthesis; L-leucine biosynthesis; L-leucine from 3-methyl-2-oxobutanoate: step 3/4. In terms of biological role, catalyzes the oxidation of 3-carboxy-2-hydroxy-4-methylpentanoate (3-isopropylmalate) to 3-carboxy-4-methyl-2-oxopentanoate. The product decarboxylates to 4-methyl-2 oxopentanoate. The polypeptide is 3-isopropylmalate dehydrogenase (Zymomonas mobilis subsp. mobilis (strain ATCC 31821 / ZM4 / CP4)).